Consider the following 691-residue polypeptide: POU domain, class 6, transcription factor 2 (691 aa).

A compositionally biased stretch (basic and acidic residues) spans 25–36; it reads MNAELRGEDKAA. Disordered regions lie at residues 25–93, 186–297, and 435–461; these read MNAE…PVGP, LQQQ…LQLV, and SQAS…SALS. Residues 186-195 are compositionally biased toward low complexity; sequence LQQQQQQQQQ. The span at 196–210 shows a compositional bias: pro residues; sequence QPPPSTNQHPQPAPQ. Residues 211 to 220 are compositionally biased toward low complexity; the sequence is APSQSQQQPL. Residues 221 to 238 are compositionally biased toward pro residues; that stretch reads QPTPPQQPPPASQQPPAP. Composition is skewed to low complexity over residues 239–280 and 438–461; these read TSQL…SQSP and SMSQ…SALS. Residues 476 to 586 form the POU-specific domain; that stretch reads VDGVNLEEIR…VLERWMAEAE (111 aa). Residues 607 to 666 constitute a DNA-binding region (homeobox); the sequence is KRKRRTSFTPQALEILNAHFEKNTHPSGQEMTEIAEKLNYDREVVRVWFCNKRQALKNTI.

It belongs to the POU transcription factor family. Class-6 subfamily. As to expression, expressed only within the CNS, where its expression is restricted to the medical habenulla, to a dispersed population of neurons in the dorsal hypothalamus, and to subsets of ganglion and amacrine cells in the retina.

It localises to the nucleus. Probable transcription factor likely to be involved in early steps in the differentiation of amacrine and ganglion cells. Recognizes and binds to the DNA sequence 5'-ATGCAAAT-3'. Isoform 1 does not bind DNA. This chain is POU domain, class 6, transcription factor 2 (POU6F2), found in Homo sapiens (Human).